The primary structure comprises 233 residues: Purine nucleoside phosphorylase DeoD-type (233 aa).

His-4 lines the a purine D-ribonucleoside pocket. Phosphate contacts are provided by residues Gly-20, Arg-24, Arg-43, and 87–90 (RVGT). A purine D-ribonucleoside is bound by residues 179–181 (EME) and 203–204 (SD). Asp-204 serves as the catalytic Proton donor.

The protein belongs to the PNP/UDP phosphorylase family. Homohexamer; trimer of homodimers.

The catalysed reaction is a purine D-ribonucleoside + phosphate = a purine nucleobase + alpha-D-ribose 1-phosphate. The enzyme catalyses a purine 2'-deoxy-D-ribonucleoside + phosphate = a purine nucleobase + 2-deoxy-alpha-D-ribose 1-phosphate. Its function is as follows. Catalyzes the reversible phosphorolytic breakdown of the N-glycosidic bond in the beta-(deoxy)ribonucleoside molecules, with the formation of the corresponding free purine bases and pentose-1-phosphate. The polypeptide is Purine nucleoside phosphorylase DeoD-type (Clostridium novyi (strain NT)).